A 404-amino-acid polypeptide reads, in one-letter code: Tryptophan synthase beta chain (404 aa).

Position 95 is an N6-(pyridoxal phosphate)lysine (Lys-95).

Belongs to the TrpB family. In terms of assembly, tetramer of two alpha and two beta chains. Pyridoxal 5'-phosphate serves as cofactor.

It carries out the reaction (1S,2R)-1-C-(indol-3-yl)glycerol 3-phosphate + L-serine = D-glyceraldehyde 3-phosphate + L-tryptophan + H2O. It participates in amino-acid biosynthesis; L-tryptophan biosynthesis; L-tryptophan from chorismate: step 5/5. Functionally, the beta subunit is responsible for the synthesis of L-tryptophan from indole and L-serine. The sequence is that of Tryptophan synthase beta chain (trpB) from Thermus thermophilus (strain ATCC BAA-163 / DSM 7039 / HB27).